The following is a 306-amino-acid chain: Armadillo repeat-containing protein 10 (306 aa).

A helical membrane pass occupies residues 7–29 (VGWVAAGLVLGAGACYCIYRLTR). Serine 43 is modified (phosphoserine). Threonine 48 is subject to Phosphothreonine. The stretch at 101 to 143 (GGIPIVGNKINSLNQSIKEKALNALNNLSVNVENQTKIKIYVP) is one ARM repeat.

Interacts with the DNA-binding domain of p53/TP53.

Its subcellular location is the endoplasmic reticulum membrane. The protein resides in the mitochondrion outer membrane. In terms of biological role, may play a role in cell survival and cell growth. May suppress the transcriptional activity of p53/TP53. In Mus musculus (Mouse), this protein is Armadillo repeat-containing protein 10 (Armc10).